A 252-amino-acid polypeptide reads, in one-letter code: 3-deoxy-manno-octulosonate cytidylyltransferase (252 aa).

Belongs to the KdsB family.

It is found in the cytoplasm. It catalyses the reaction 3-deoxy-alpha-D-manno-oct-2-ulosonate + CTP = CMP-3-deoxy-beta-D-manno-octulosonate + diphosphate. The protein operates within nucleotide-sugar biosynthesis; CMP-3-deoxy-D-manno-octulosonate biosynthesis; CMP-3-deoxy-D-manno-octulosonate from 3-deoxy-D-manno-octulosonate and CTP: step 1/1. It functions in the pathway bacterial outer membrane biogenesis; lipopolysaccharide biosynthesis. In terms of biological role, activates KDO (a required 8-carbon sugar) for incorporation into bacterial lipopolysaccharide in Gram-negative bacteria. The sequence is that of 3-deoxy-manno-octulosonate cytidylyltransferase from Rhodospirillum rubrum (strain ATCC 11170 / ATH 1.1.1 / DSM 467 / LMG 4362 / NCIMB 8255 / S1).